Consider the following 313-residue polypeptide: Porphobilinogen deaminase (313 aa).

Position 242 is an S-(dipyrrolylmethanemethyl)cysteine (Cys-242).

This sequence belongs to the HMBS family. Monomer. It depends on dipyrromethane as a cofactor.

The catalysed reaction is 4 porphobilinogen + H2O = hydroxymethylbilane + 4 NH4(+). The protein operates within porphyrin-containing compound metabolism; protoporphyrin-IX biosynthesis; coproporphyrinogen-III from 5-aminolevulinate: step 2/4. Tetrapolymerization of the monopyrrole PBG into the hydroxymethylbilane pre-uroporphyrinogen in several discrete steps. The chain is Porphobilinogen deaminase from Yersinia pseudotuberculosis serotype O:1b (strain IP 31758).